An 888-amino-acid polypeptide reads, in one-letter code: E3 ubiquitin-protein ligase SH3RF1 (888 aa).

Residues 12–53 (CPVCLERLDASAKVLPCQHTFCKRCLLGIVGSRNELRCPECR) form an RING-type zinc finger. Over residues 108–127 (SSKDLQSSQGGQQPRVQSWS) the composition is skewed to polar residues. The tract at residues 108–128 (SSKDLQSSQGGQQPRVQSWSP) is disordered. 2 consecutive SH3 domains span residues 134–193 (PQLP…IIKP) and 196–259 (QPPP…FNSA). The tract at residues 275–321 (DAGECSSAAAQSSTAPKHSDTKKNTKKRHSFTSLTMANKSSQASQNR) is disordered. Residues 292 to 362 (HSDTKKNTKK…APSQVHISTT (71 aa)) form an interaction with RAC1 region. Ser-304 carries the post-translational modification Phosphoserine. The segment covering 305–321 (FTSLTMANKSSQASQNR) has biased composition (polar residues). The segment at 440–543 (HLRPQTRPSV…STAGGPAQKL (104 aa)) is interaction with AKT2. Residues 445-506 (TRPSVYVAIY…PGNYVAPVTR (62 aa)) form the SH3 3 domain. Disordered regions lie at residues 516–548 (VPMS…GNGV), 620–639 (SVGL…LMPG), and 684–741 (TVLP…ASPT). The segment covering 520 to 535 (TAGQTSRGVTMVSPST) has biased composition (polar residues). At Ser-532 the chain carries Phosphoserine. A compositionally biased stretch (polar residues) spans 692–704 (SPDSASSACGNSS). Basic and acidic residues predominate over residues 707–718 (KPDKDSKKEKKG). Ser-735 bears the Phosphoserine mark. The region spanning 829–888 (VVCERHRVVVSYPPQSEAELELKEGDIVFVHKKREDGWFKGTLQRNGKTGLFPGSFVENI) is the SH3 4 domain.

The protein belongs to the SH3RF family. As to quaternary structure, interacts with RAC1; in a GTP-dependent manner. Interacts with MAP3K10/MLK2 and MAP3K11/MLK3. Interacts with MAPK8IP; this interaction leads to the PJAC complex (POSH-JIP or SH3RF1/MAPK8IP apoptotic complex) with a 1:1 ratio. Interacts with SIAH1. Interacts with HERP1. Probably part of a signaling complex that may contain SH3RF1, MAPK8IP, DLK1, MAP2K4/MKK4, MAP2K7/MKK7, MAPK8/JNK1, MAPK9/JNK2, AKT1 and AKT2. Found in a complex with RAC2, MAP3K7/TAK1, MAP2K7/MKK7, MAPK8IP1/JIP1, MAPK8/JNK1 and MAPK9/JNK2. Found in a complex with RAC1, MAP3K11/MLK3, MAP2K7/MKK7, MAPK8IP1/JIP1 and MAPK8/JNK1. Interacts with SH3RF2. In terms of processing, phosphorylated at Ser-304 by AKT1 and AKT2. When phosphorylated, it has reduced ability to bind Rac. Post-translationally, autoubiquitinated. Ubiquitinated by SH3RF2, leading to proteasome-mediated degradation.

The protein resides in the cytoplasm. Its subcellular location is the perinuclear region. It is found in the cell projection. It localises to the lamellipodium. The protein localises to the golgi apparatus. The protein resides in the trans-Golgi network. It catalyses the reaction S-ubiquitinyl-[E2 ubiquitin-conjugating enzyme]-L-cysteine + [acceptor protein]-L-lysine = [E2 ubiquitin-conjugating enzyme]-L-cysteine + N(6)-ubiquitinyl-[acceptor protein]-L-lysine.. It participates in protein modification; protein ubiquitination. Has E3 ubiquitin-protein ligase activity. In the absence of an external substrate, it can catalyze self-ubiquitination. Stimulates ubiquitination of potassium channel KCNJ1, enhancing it's dynamin-dependent and clathrin-independent endocytosis. Acts as a scaffold protein that coordinates with MAPK8IP1/JIP1 in organizing different components of the JNK pathway, including RAC1 or RAC2, MAP3K11/MLK3 or MAP3K7/TAK1, MAP2K7/MKK7, MAPK8/JNK1 and/or MAPK9/JNK2 into a functional multiprotein complex to ensure the effective activation of the JNK signaling pathway. Regulates the differentiation of CD4(+) and CD8(+) T-cells and promotes T-helper 1 (Th1) cell differentiation. Regulates the activation of MAPK8/JNK1 and MAPK9/JNK2 in CD4(+) T-cells and the activation of MAPK8/JNK1 in CD8(+) T-cells. Plays a crucial role in the migration of neocortical neurons in the developing brain. Controls proper cortical neuronal migration and the formation of proximal cytoplasmic dilation in the leading process (PCDLP) in migratory neocortical neurons by regulating the proper localization of activated RAC1 and F-actin assembly. In terms of biological role, (Microbial infection) Plays an essential role in the targeting of HIV-1 Gag to the plasma membrane, this function is dependent on it's RING domain, and hence it's E3 ligase activity. This chain is E3 ubiquitin-protein ligase SH3RF1 (SH3RF1), found in Homo sapiens (Human).